The sequence spans 322 residues: Ribosomal RNA small subunit methyltransferase H (322 aa).

Residues 40–42 (GGH), aspartate 60, phenylalanine 84, aspartate 106, and glutamine 113 contribute to the S-adenosyl-L-methionine site.

Belongs to the methyltransferase superfamily. RsmH family.

The protein localises to the cytoplasm. It carries out the reaction cytidine(1402) in 16S rRNA + S-adenosyl-L-methionine = N(4)-methylcytidine(1402) in 16S rRNA + S-adenosyl-L-homocysteine + H(+). Functionally, specifically methylates the N4 position of cytidine in position 1402 (C1402) of 16S rRNA. This Aggregatibacter aphrophilus (strain NJ8700) (Haemophilus aphrophilus) protein is Ribosomal RNA small subunit methyltransferase H.